The primary structure comprises 31 residues: Photosystem I reaction center subunit XII (31 aa).

Residues 7-26 (QVYVALVIALLPAVLAFRLS) form a helical membrane-spanning segment.

The protein belongs to the PsaM family.

Its subcellular location is the cellular thylakoid membrane. This Thermosynechococcus vestitus (strain NIES-2133 / IAM M-273 / BP-1) protein is Photosystem I reaction center subunit XII.